A 563-amino-acid polypeptide reads, in one-letter code: Calnexin homolog (563 aa).

An N-terminal signal peptide occupies residues Met-1–Ala-23. Residues Glu-24–Glu-493 are Lumenal-facing. Asp-98 contributes to the Ca(2+) binding site. The cysteines at positions 141 and 175 are disulfide-linked. An alpha-D-glucoside is bound by residues Tyr-145, Lys-147, Tyr-166, and Asp-173. Asn-236 is a glycosylation site (N-linked (GlcNAc...) asparagine). The segment at Glu-241 to Glu-323 is disordered. Residues Pro-249–Asp-279 show a composition bias toward basic and acidic residues. Residues Ile-253–Glu-386 form a p domain (Extended arm) region. Over residues Asp-280–Pro-305 the composition is skewed to acidic residues. A disulfide bridge links Cys-337 with Cys-343. Position 402 (Glu-402) interacts with an alpha-D-glucoside. Residue Asp-413 participates in Ca(2+) binding. Residues Val-494–Gly-514 traverse the membrane as a helical segment. The Cytoplasmic portion of the chain corresponds to Ala-515–Gln-563. The interval Ala-521–Gln-563 is disordered. Over residues Lys-526 to Ser-539 the composition is skewed to basic and acidic residues.

The protein belongs to the calreticulin family.

Its subcellular location is the endoplasmic reticulum membrane. In terms of biological role, interacts with newly synthesized monoglucosylated glycoproteins in the endoplasmic reticulum. It may act in assisting protein assembly and/or in the retention within the ER of unassembled protein subunits. It seems to play a major role in the quality control apparatus of the ER by the retention of incorrectly folded proteins. The polypeptide is Calnexin homolog (Aspergillus fumigatus (strain ATCC MYA-4609 / CBS 101355 / FGSC A1100 / Af293) (Neosartorya fumigata)).